The sequence spans 405 residues: Scramblase ANY1 (405 aa).

The Cytoplasmic segment spans residues 1–51 (MSTTGPLDATLIRDVAVATATKASYDMSDTLYSYLPKVDQFYIPEWLTMQF). The chain crosses the membrane as a helical span at residues 52 to 72 (IANNLISFTPLFSYGTTIISI). Residues 73–76 (EKCK) are Lumenal-facing. A helical membrane pass occupies residues 77–97 (TALGFSIDICATMLIASILRI). Residues 98–103 (SYYLIT) lie on the Cytoplasmic side of the membrane. A helical membrane pass occupies residues 104-124 (PYEITLLRQSLVMIFIQLILL). At 125–177 (RTSLKYRPDEYKYQNLTDVESLSHLIHDIWFEFFSCINRPKFLSEDWKNLIKS) the chain is on the lumenal side. The helical transmembrane segment at 178 to 198 (LSFTNLLKFSFKIFLAFFYKI) threads the bilayer. Topologically, residues 199 to 223 (LKFFDPNFKRIGAFWQWDDDKNFWR) are cytoplasmic. The helical transmembrane segment at 224–244 (FLALFATVQILVTFFISNILN) threads the bilayer. The Lumenal portion of the chain corresponds to 245–254 (WDSLAQGLGS). Residues 252–309 (LGSIIGSLGLLVESLLPLPQIAILYKLKSVQGFKLILLVSWLCGDTLKITYLIFGAKN) enclose the PQ-loop domain. The helical transmembrane segment at 255–275 (IIGSLGLLVESLLPLPQIAIL) threads the bilayer. Residues 276–283 (YKLKSVQG) lie on the Cytoplasmic side of the membrane. Residues 284 to 306 (FKLILLVSWLCGDTLKITYLIFG) form a helical membrane-spanning segment. At 307–312 (AKNISA) the chain is on the lumenal side. A helical membrane pass occupies residues 313–335 (LFVIFALFQMSLDFYIGGQYIYY). Topologically, residues 336–405 (RYYYPKLRHQ…GKSQAQAVTL (70 aa)) are cytoplasmic. The disordered stretch occupies residues 379–405 (LKQDSNDTSDSPQDDQVGKSQAQAVTL). Residues 396-405 (GKSQAQAVTL) are compositionally biased toward polar residues.

As to quaternary structure, interacts with NEO1.

The protein localises to the golgi apparatus membrane. It localises to the late endosome membrane. Phospholipid scramblase that transports phosphatidylserine (PS) and phosphatidylethalonamine (PE) bidirectionally from one leaflet to the other of the phospholipid bilayer to at least partially collapse the membrane asymmetry established by NEO1 and other flippases. The PS scramblase activity has been disputed. Functions in the trafficking pathway from endosomes to the trans-Golgi network (TGN). The polypeptide is Scramblase ANY1 (Saccharomyces cerevisiae (strain ATCC 204508 / S288c) (Baker's yeast)).